We begin with the raw amino-acid sequence, 297 residues long: Phosphatidylinositol N-acetylglucosaminyltransferase subunit C (297 aa).

Helical transmembrane passes span 67-87 (VFVVIWWYMDEGLLAPQWLFG), 88-108 (TGLASSLVGYVLFDLIDGGDG), 153-173 (SVFMLLGHLIFFDYGANAAIV), and 239-259 (AFGGLLSISGVGAILFALLLF).

Belongs to the PIGC family. In terms of assembly, component of the glycosylphosphatidylinositol-N-acetylglucosaminyltransferase (GPI-GnT) complex composed at least by PIGA, PIGC, PIGH, PIGP, PIGQ, PIGY and DPM2. Interacts with PIGQ. Interacts with the heterodimer PIGA:PIGH.

It is found in the endoplasmic reticulum membrane. Its pathway is glycolipid biosynthesis; glycosylphosphatidylinositol-anchor biosynthesis. Its function is as follows. Part of the glycosylphosphatidylinositol-N-acetylglucosaminyltransferase (GPI-GnT) complex that catalyzes the transfer of N-acetylglucosamine from UDP-N-acetylglucosamine to phosphatidylinositol and participates in the first step of GPI biosynthesis. The protein is Phosphatidylinositol N-acetylglucosaminyltransferase subunit C of Rattus norvegicus (Rat).